A 120-amino-acid chain; its full sequence is NAD(P)H-quinone oxidoreductase subunit 3, chloroplastic (120 aa).

3 consecutive transmembrane segments (helical) span residues 9–29, 64–84, and 88–108; these read IFWTFLIIASLIPILAFWISG, MFALVFVVFDVETVFLYPWAM, and VLGVSVFIEAFIFVLILVVGL.

Belongs to the complex I subunit 3 family. As to quaternary structure, NDH is composed of at least 16 different subunits, 5 of which are encoded in the nucleus.

It is found in the plastid. Its subcellular location is the chloroplast thylakoid membrane. It catalyses the reaction a plastoquinone + NADH + (n+1) H(+)(in) = a plastoquinol + NAD(+) + n H(+)(out). The enzyme catalyses a plastoquinone + NADPH + (n+1) H(+)(in) = a plastoquinol + NADP(+) + n H(+)(out). NDH shuttles electrons from NAD(P)H:plastoquinone, via FMN and iron-sulfur (Fe-S) centers, to quinones in the photosynthetic chain and possibly in a chloroplast respiratory chain. The immediate electron acceptor for the enzyme in this species is believed to be plastoquinone. Couples the redox reaction to proton translocation, and thus conserves the redox energy in a proton gradient. The protein is NAD(P)H-quinone oxidoreductase subunit 3, chloroplastic of Lolium perenne (Perennial ryegrass).